We begin with the raw amino-acid sequence, 432 residues long: Glutamate-gated chloride channel subunit beta (432 aa).

An N-terminal signal peptide occupies residues 1–18 (MSQYMMVAVAAVVAVAGS). Residues 19-249 (SQISRRSTGG…MQLTLKRQFS (231 aa)) are Extracellular-facing. N-linked (GlcNAc...) asparagine glycosylation is present at asparagine 52. L-glutamate is bound by residues arginine 69, arginine 88, and serine 155. Residues cysteine 164 and cysteine 178 are joined by a disulfide bond. L-glutamate is bound at residue serine 184. Asparagine 219 carries an N-linked (GlcNAc...) asparagine glycan. Cysteine 226 and cysteine 237 are disulfide-bonded. Residues 250 to 272 (YYLVQLYGPTTMIVIVSWVSFWI) traverse the membrane as a helical segment. Residues 273-277 (DMHST) lie on the Cytoplasmic side of the membrane. The chain crosses the membrane as a helical span at residues 278–299 (AGRVALGVTTLLTMTTMQAAIN). Topologically, residues 300 to 306 (AKLPPVS) are extracellular. Residues 307–327 (YVKVVDVWLGACQTFVFGALL) form a helical membrane-spanning segment. At 328–402 (EYAFVSYQDS…KPDYLPAKID (75 aa)) the chain is on the cytoplasmic side. A helical transmembrane segment spans residues 403–426 (YYARFCVPLGFLAFNAIYWTSCLV). At 427-432 (MVSRLV) the chain is on the extracellular side.

Belongs to the ligand-gated ion channel (TC 1.A.9) family. Glutamate-gated chloride channel (TC 1.A.9.4) subfamily. Pentamer. Expressed in motor neuron commissures at the anterior portion of the worms.

The protein resides in the postsynaptic cell membrane. The protein localises to the cell membrane. Its function is as follows. Glutamate-gated chloride channel subunit; channel properties may be modulated by the formation of heteromeric channels. Glutamate binding triggers a rapidly reversible current, while the anti-helmintic drug ivermectin triggers a permanently open channel configuration. The polypeptide is Glutamate-gated chloride channel subunit beta (Haemonchus contortus (Barber pole worm)).